The following is a 425-amino-acid chain: Histone-binding protein RBBP4 (425 aa).

Ala2 is modified (N-acetylalanine). Lys4 is modified (N6-acetyllysine; alternate). Lys4 participates in a covalent cross-link: Glycyl lysine isopeptide (Lys-Gly) (interchain with G-Cter in SUMO2); alternate. Residue Lys4 forms a Glycyl lysine isopeptide (Lys-Gly) (interchain with G-Cter in ubiquitin); alternate linkage. WD repeat units follow at residues 32 to 125 (YDLV…NHEG), 126 to 175 (EVNR…RLRG), 176 to 223 (HQKE…KTIF), 225 to 270 (GHTA…HSVD), 271 to 314 (AHTA…HSFE), 315 to 371 (SHKD…FIHG), and 372 to 404 (GHTAKISDFSWNPNEPWVICSVSEDNIMQVWQM). Ser110 carries the phosphoserine modification. The residue at position 160 (Lys160) is an N6-acetyllysine; alternate. Residue Lys160 forms a Glycyl lysine isopeptide (Lys-Gly) (interchain with G-Cter in SUMO2); alternate linkage. Phosphoserine is present on Ser355.

This sequence belongs to the WD repeat RBAP46/RBAP48/MSI1 family. In terms of assembly, binds directly to helix 1 of the histone fold of histone H4, a region that is not accessible when H4 is in chromatin. Subunit of the chromatin assembly factor 1 (CAF-1) complex, which is composed of RBBP4, CHAF1B and CHAF1A. Subunit of the core histone deacetylase (HDAC) complex, which is composed of HDAC1, HDAC2, RBBP4 and RBBP7. The core HDAC complex associates with SIN3A, ARID4B/SAP180, SAP18, SAP30, SAP130, SUDS3/SAP45 and possibly ARID4A/RBP1 and ING1 to form the SIN3 HDAC complex. Component of the nucleosome remodeling and deacetylase (NuRD) repressor complex, composed of core proteins MTA1, MTA2, MTA3, RBBP4, RBBP7, HDAC1, HDAC2, MBD2, MBD3, and peripherally associated proteins CDK2AP1, CDK2AP2, GATAD2A, GATAD2B, CHD3, CHD4 and CHD5. The exact stoichiometry of the NuRD complex is unknown, and some subunits such as MBD2 and MBD3, GATAD2A and GATAD2B, and CHD3, CHD4 and CHD5 define mutually exclusive NuRD complexes. Interacts with ZNF512B; the interaction is direct and may play a role in repressing gene expression. The NuRD complex may also interact with MBD3L1 and MBD3L2. Component of the PRC2 complex, which consists of the core subunits EED, EZH1 or EZH2, SUZ12, and RBBP4, and various combinations of accessory subunits including AEBP2, JARID2, PHF19, MTF2 and EPOP. Forms a monomeric PRC2.2 (class 2) complex consisting of at least SUZ12, RBBP4, AEBP2 and JARID2. Forms a dimeric PRC2.1 (class 1, PRC-PCL) complex consisting of at least SUZ12, RBBP4, and PHF19; PHF19 stabilizes the dimeric structure which enhances PRC2 interaction with chromatin. Component of the NURF-1 ISWI chromatin remodeling complex (also called the nucleosome-remodeling factor (NURF) complex) at least composed of SMARCA1 (isoform 2), BPTF, RBBP4 and RBBP7. Within the complex interacts with isoform 2 of SMARCA1. Component of the BPFT-SMARCA1 complex at least composed of SMARCA1 (isoform 1), BPFT, RBBP4 and RBBP7; the complex is catalytically inactive and does not remodel chromatin. Within the complex interacts with isoform 1 of SMARCA1. Interacts with the ISWI chromatin remodeling complex component SMARCA5; the interaction is direct. Interacts with the viral protein-binding domain of the retinoblastoma protein (RB1). Component of the DREAM complex (also named LINC complex) at least composed of E2F4, E2F5, LIN9, LIN37, LIN52, LIN54, MYBL1, MYBL2, RBL1, RBL2, RBBP4, TFDP1 and TFDP2. The complex exists in quiescent cells where it represses cell cycle-dependent genes. It dissociates in S phase when LIN9, LIN37, LIN52 and LIN54 form a subcomplex that binds to MYBL2. Found in a complex composed of at least SINHCAF, SIN3A, HDAC1, SAP30, RBBP4, OGT and TET1. Interacts with ZNF827; the interaction is direct and recruits RBBP4 to telomeres. Interacts with MTA1; the interaction is direct and mutually exclusive with binding histone H4. Interacts with ARMC12 (via ARM domains). Interacts with BRCA1. Interacts with CDK2AP1. Interacts with CREBBP, and this interaction may be enhanced by the binding of phosphorylated CREB1 to CREBBP. Interacts with ERCC6. Interacts with HDAC7. Interacts with PHF6. Interacts with PWWP2B. Interacts with SPEN/MINT. Interacts with SUV39H1.

It is found in the nucleus. The protein resides in the chromosome. It localises to the telomere. Functionally, core histone-binding subunit that may target chromatin assembly factors, chromatin remodeling factors and histone deacetylases to their histone substrates in a manner that is regulated by nucleosomal DNA. Component of the chromatin assembly factor 1 (CAF-1) complex, which is required for chromatin assembly following DNA replication and DNA repair. Component of the core histone deacetylase (HDAC) complex, which promotes histone deacetylation and consequent transcriptional repression. Component of the nucleosome remodeling and histone deacetylase complex (the NuRD complex), which promotes transcriptional repression by histone deacetylation and nucleosome remodeling. Component of the PRC2 complex, which promotes repression of homeotic genes during development. Component of the NURF (nucleosome remodeling factor) complex. This is Histone-binding protein RBBP4 (RBBP4) from Bos taurus (Bovine).